We begin with the raw amino-acid sequence, 319 residues long: HTH-type transcriptional regulator YidZ (319 aa).

In terms of domain architecture, HTH lysR-type spans 8–65; the sequence is LDLNLLLCLQLLMQERSVTKAAKRINVTPSAVSKSLAKLRAWFDDPLFVNSPLGLSPT. Positions 25-44 form a DNA-binding region, H-T-H motif; that stretch reads VTKAAKRINVTPSAVSKSLA.

It belongs to the LysR transcriptional regulatory family.

Functionally, involved in anaerobic NO protection. The chain is HTH-type transcriptional regulator YidZ from Escherichia coli (strain K12 / MC4100 / BW2952).